Here is a 358-residue protein sequence, read N- to C-terminus: Adenosine deaminase (358 aa).

Zn(2+) contacts are provided by His14 and His16. Residues His16, Asp18, and Gly183 each coordinate substrate. Zn(2+) is bound at residue His212. The Proton donor role is filled by Glu215. Zn(2+) is bound at residue Asp294. Substrate is bound at residue Asp295.

The protein belongs to the metallo-dependent hydrolases superfamily. Adenosine and AMP deaminases family. Zn(2+) is required as a cofactor.

Its subcellular location is the cell membrane. The protein resides in the cell junction. It is found in the cytoplasmic vesicle lumen. The protein localises to the cytoplasm. It localises to the lysosome. The enzyme catalyses adenosine + H2O + H(+) = inosine + NH4(+). It carries out the reaction 2'-deoxyadenosine + H2O + H(+) = 2'-deoxyinosine + NH4(+). Catalyzes the hydrolytic deamination of adenosine and 2-deoxyadenosine. Plays an important role in purine metabolism and in adenosine homeostasis. Modulates signaling by extracellular adenosine, and so contributes indirectly to cellular signaling events. May act as a positive regulator of T-cell coactivation. In Xenopus laevis (African clawed frog), this protein is Adenosine deaminase (ada).